Here is a 153-residue protein sequence, read N- to C-terminus: MHHRFTPPMMSCKDTAIQLLSRRDHGQYELRQKLTVKGYASQDIESAMHFCLEHGYLDDLRYAKSQIRQHVGKGHGERRIRQELSLKQVSDSVVENAFAEEPQDWFELAKSVAMKKFNGVKAKEQKEYAKQVRFLQYRGFSFEQIRYALSDEA.

Belongs to the RecX family.

The protein resides in the cytoplasm. Its function is as follows. Modulates RecA activity. This is Regulatory protein RecX from Vibrio vulnificus (strain CMCP6).